A 298-amino-acid polypeptide reads, in one-letter code: Glutamyl-Q tRNA(Asp) synthetase (298 aa).

L-glutamate contacts are provided by residues 9-13 (RFAPS) and Glu45. Positions 12–22 (PSPSGELHFGS) match the 'HIGH' region motif. Cys101, Cys103, Tyr115, and Cys119 together coordinate Zn(2+). Residues Tyr172 and Arg190 each coordinate L-glutamate. Residues 228 to 232 (KLSKQ) carry the 'KMSKS' region motif. Lys231 contributes to the ATP binding site.

The protein belongs to the class-I aminoacyl-tRNA synthetase family. GluQ subfamily. Requires Zn(2+) as cofactor.

In terms of biological role, catalyzes the tRNA-independent activation of glutamate in presence of ATP and the subsequent transfer of glutamate onto a tRNA(Asp). Glutamate is transferred on the 2-amino-5-(4,5-dihydroxy-2-cyclopenten-1-yl) moiety of the queuosine in the wobble position of the QUC anticodon. This Salmonella choleraesuis (strain SC-B67) protein is Glutamyl-Q tRNA(Asp) synthetase.